A 71-amino-acid polypeptide reads, in one-letter code: Small ribosomal subunit protein bS21 (71 aa).

The protein belongs to the bacterial ribosomal protein bS21 family.

The protein is Small ribosomal subunit protein bS21 of Acidithiobacillus ferrooxidans (strain ATCC 23270 / DSM 14882 / CIP 104768 / NCIMB 8455) (Ferrobacillus ferrooxidans (strain ATCC 23270)).